A 1387-amino-acid polypeptide reads, in one-letter code: DNA-directed RNA polymerase subunit beta' (1387 aa).

Zn(2+) is bound by residues C70, C72, C85, and C88. 3 residues coordinate Mg(2+): D461, D463, and D465. C808, C882, C889, and C892 together coordinate Zn(2+). Residues 1367–1387 (QDEAKGVGQETPRLSGQEAAE) form a disordered region.

The protein belongs to the RNA polymerase beta' chain family. As to quaternary structure, the RNAP catalytic core consists of 2 alpha, 1 beta, 1 beta' and 1 omega subunit. When a sigma factor is associated with the core the holoenzyme is formed, which can initiate transcription. The cofactor is Mg(2+). Requires Zn(2+) as cofactor.

The enzyme catalyses RNA(n) + a ribonucleoside 5'-triphosphate = RNA(n+1) + diphosphate. Functionally, DNA-dependent RNA polymerase catalyzes the transcription of DNA into RNA using the four ribonucleoside triphosphates as substrates. This chain is DNA-directed RNA polymerase subunit beta', found in Granulibacter bethesdensis (strain ATCC BAA-1260 / CGDNIH1).